The following is a 612-amino-acid chain: Transcription factor unc-37 (612 aa).

The disordered stretch occupies residues F143–Q228. Over residues G150–G159 the composition is skewed to gly residues. The interval G153–A196 is CCN domain. Residues D171 to T182 show a composition bias toward acidic residues. A compositionally biased stretch (polar residues) spans D202–S221. WD repeat units lie at residues G308–T339, L372–D402, T414–D444, G456–D486, Q538–R568, and K579–A609.

The protein belongs to the WD repeat Groucho/TLE family. Interacts with unc-4. Interacts with ref-1. May interact with mls-1.

Its subcellular location is the nucleus. Functionally, transcriptional corepressor that functions with the neural specificity gene unc-4 to govern motor neuron identity. In concert with unc-4, represses the expression of VB-specific genes such as ceh-12, thereby preventing the adoption of VB motor neuron fate. May function with transcription factor mls-1 to promote uterine muscle specification and formation. This is Transcription factor unc-37 (unc-37) from Caenorhabditis elegans.